Reading from the N-terminus, the 205-residue chain is Small ribosomal subunit protein mS26 (205 aa).

A mitochondrion-targeting transit peptide spans methionine 1–glycine 26.

It belongs to the mitochondrion-specific ribosomal protein mS26 family. Component of the mitochondrial ribosome small subunit (28S) which comprises a 12S rRNA and about 30 distinct proteins.

The protein resides in the mitochondrion. The polypeptide is Small ribosomal subunit protein mS26 (MRPS26) (Bos taurus (Bovine)).